Reading from the N-terminus, the 307-residue chain is Protoheme IX farnesyltransferase (307 aa).

9 consecutive transmembrane segments (helical) span residues 28 to 48 (LVIF…NPIL), 50 to 70 (FTAI…NQWW), 99 to 117 (FGIL…AINW), 121 to 138 (IILA…TIWL), 146 to 166 (IVIG…AVTG), 173 to 193 (VLLF…LALF), 219 to 239 (ILVY…IGAT), 241 to 261 (AIYG…SVPV), and 278 to 298 (LFGF…ADRY).

It belongs to the UbiA prenyltransferase family. Protoheme IX farnesyltransferase subfamily.

It is found in the cell inner membrane. The catalysed reaction is heme b + (2E,6E)-farnesyl diphosphate + H2O = Fe(II)-heme o + diphosphate. Its pathway is porphyrin-containing compound metabolism; heme O biosynthesis; heme O from protoheme: step 1/1. In terms of biological role, converts heme B (protoheme IX) to heme O by substitution of the vinyl group on carbon 2 of heme B porphyrin ring with a hydroxyethyl farnesyl side group. This is Protoheme IX farnesyltransferase from Erythrobacter litoralis (strain HTCC2594).